The chain runs to 42 residues: Photosystem II reaction center protein J (42 aa).

A helical transmembrane segment spans residues 10 to 30 (IPLWLVATVAGLAVIALLGVF).

Belongs to the PsbJ family. As to quaternary structure, PSII is composed of 1 copy each of membrane proteins PsbA, PsbB, PsbC, PsbD, PsbE, PsbF, PsbH, PsbI, PsbJ, PsbK, PsbL, PsbM, PsbT, PsbX, PsbY, PsbZ, Psb30/Ycf12, at least 3 peripheral proteins of the oxygen-evolving complex and a large number of cofactors. It forms dimeric complexes.

It localises to the plastid. Its subcellular location is the chloroplast thylakoid membrane. Its function is as follows. One of the components of the core complex of photosystem II (PSII). PSII is a light-driven water:plastoquinone oxidoreductase that uses light energy to abstract electrons from H(2)O, generating O(2) and a proton gradient subsequently used for ATP formation. It consists of a core antenna complex that captures photons, and an electron transfer chain that converts photonic excitation into a charge separation. This Chlorokybus atmophyticus (Soil alga) protein is Photosystem II reaction center protein J.